A 322-amino-acid polypeptide reads, in one-letter code: MTTANDRPEEASKLSTEELLERIVALKKELNAVILAHYYTVPEVQQAADIVGDSLALARAAEDNSADVIVFAGVYFMAETAKILNPGKLVLMPDDHAGCPLADSCPEAEFRAFREQHPDAIAITYINSTAAIKALSDITCTSSNAAHIVEQIPPEQKIIFGPDRNLGTWLSKKLDRDMILWQGYCYVHDAYSEVYMIQAMAKYPDAELIAHPECRDEVLRHASFVGSTAALLDYTVKSPSQSFIVATEPGILYEMEKRSPGKTFIPAPKDPANPRSVCTQMKQNTLEKLYLCMVNRSPEITVDENLREAALKPIKKMLEMSA.

Iminosuccinate contacts are provided by His37 and Ser54. Residue Cys99 coordinates [4Fe-4S] cluster. Iminosuccinate is bound by residues 125–127 and Ser142; that span reads YIN. Cys185 serves as a coordination point for [4Fe-4S] cluster. Iminosuccinate is bound by residues 211-213 and Thr228; that span reads HPE. Cys278 is a binding site for [4Fe-4S] cluster.

It belongs to the quinolinate synthase family. Type 2 subfamily. Requires [4Fe-4S] cluster as cofactor.

It is found in the cytoplasm. It carries out the reaction iminosuccinate + dihydroxyacetone phosphate = quinolinate + phosphate + 2 H2O + H(+). It functions in the pathway cofactor biosynthesis; NAD(+) biosynthesis; quinolinate from iminoaspartate: step 1/1. In terms of biological role, catalyzes the condensation of iminoaspartate with dihydroxyacetone phosphate to form quinolinate. In Chlorobaculum parvum (strain DSM 263 / NCIMB 8327) (Chlorobium vibrioforme subsp. thiosulfatophilum), this protein is Quinolinate synthase.